We begin with the raw amino-acid sequence, 324 residues long: Heat-inducible transcription repressor HrcA (324 aa).

It belongs to the HrcA family.

Negative regulator of class I heat shock genes (grpE-dnaK-dnaJ and groELS operons). Prevents heat-shock induction of these operons. In Synechococcus sp. (strain CC9902), this protein is Heat-inducible transcription repressor HrcA.